A 94-amino-acid chain; its full sequence is Copper resistance protein K (94 aa).

The first 20 residues, 1–20, serve as a signal peptide directing secretion; that stretch reads MKQKLMVGAFIAAVSLSAAA.

In terms of assembly, monomer in the copper-bound form. Homodimer as apoprotein. Dissociates into monomers upon copper binding.

The protein localises to the periplasm. In terms of biological role, involved in resistance to copper. Can bind up to 2 copper ions. Has higher affinity for Cu(+) than for Cu(2+). The chain is Copper resistance protein K (copK) from Cupriavidus metallidurans (strain ATCC 43123 / DSM 2839 / NBRC 102507 / CH34) (Ralstonia metallidurans).